We begin with the raw amino-acid sequence, 759 residues long: Inhibitor of nuclear factor kappa-B kinase subunit alpha (759 aa).

The disordered stretch occupies residues 1-20; the sequence is MERGAERGPPPAPGGVALRG. One can recognise a Protein kinase domain in the interval 29-316; the sequence is WEMRDRLGTG…PETNSPKCFL (288 aa). ATP-binding positions include 35-43 and Lys58; that span reads LGTGGFGNV. Asp158 acts as the Proton acceptor in catalysis. The leucine-zipper stretch occupies residues 469-490; that stretch reads LLRYNANLIKMKNNMVSASQQL. Residues 691-703 show a composition bias toward polar residues; it reads TPAATWVPQSSSE. Positions 691–715 are disordered; that stretch reads TPAATWVPQSSSEYAPHPLSSMATP. Residues 753-758 are NEMO-binding; sequence FDWSWL.

The protein belongs to the protein kinase superfamily. Ser/Thr protein kinase family. I-kappa-B kinase subfamily.

Its subcellular location is the cytoplasm. The protein localises to the nucleus. It catalyses the reaction L-seryl-[I-kappa-B protein] + ATP = O-phospho-L-seryl-[I-kappa-B protein] + ADP + H(+). With respect to regulation, activated when phosphorylated and inactivated when dephosphorylated. In terms of biological role, phosphorylates inhibitors of NF-kappa-B thus leading to the dissociation of the inhibitor/NF-kappa-B complex and ultimately the degradation of the inhibitor. Phosphorylates 'Ser-10' of histone H3 at NF-kappa-B-regulated promoters during inflammatory responses triggered by cytokines. The sequence is that of Inhibitor of nuclear factor kappa-B kinase subunit alpha (CHUK) from Gallus gallus (Chicken).